The sequence spans 599 residues: Elongation factor 4 (599 aa).

A tr-type G domain is found at 2–184; sequence KNIRNFSIIA…RLVRDIPPPE (183 aa). Residues 14–19 and 131–134 each bind GTP; these read DHGKST and NKID.

It belongs to the TRAFAC class translation factor GTPase superfamily. Classic translation factor GTPase family. LepA subfamily.

The protein resides in the cell inner membrane. It catalyses the reaction GTP + H2O = GDP + phosphate + H(+). In terms of biological role, required for accurate and efficient protein synthesis under certain stress conditions. May act as a fidelity factor of the translation reaction, by catalyzing a one-codon backward translocation of tRNAs on improperly translocated ribosomes. Back-translocation proceeds from a post-translocation (POST) complex to a pre-translocation (PRE) complex, thus giving elongation factor G a second chance to translocate the tRNAs correctly. Binds to ribosomes in a GTP-dependent manner. This chain is Elongation factor 4, found in Cronobacter sakazakii (strain ATCC BAA-894) (Enterobacter sakazakii).